Reading from the N-terminus, the 89-residue chain is Omega-theraphotoxin-Ba1c (89 aa).

The N-terminal stretch at 1–23 (MRSLTLAAVLACSLLLVFHTSAA) is a signal peptide. The propeptide occupies 24–50 (EEHEAQEGYLMNPGDTDTALATVDDER). 3 disulfide bridges follow: C54–C75, C58–C81, and C67–C86.

This sequence belongs to the neurotoxin 12 (Hwtx-2) family. 06 (TXP1) subfamily. In terms of tissue distribution, expressed by the venom gland.

It is found in the secreted. Inhibits voltage-gated calcium channels (Cav) in rat cerebellar granule cells. Has insecticidal activity. This Brachypelma albiceps (Mexican golden redrump tarantula) protein is Omega-theraphotoxin-Ba1c.